The primary structure comprises 368 residues: N-acetylneuraminate epimerase (368 aa).

Positions 1–19 are cleaved as a signal peptide; it reads MNKTITALAIMMASFAANA. Kelch repeat units follow at residues 40-84, 86-137, 139-173, 174-219, 222-265, 287-336, and 338-367; these read TVYI…AFID, NLYV…FVHN, KAYV…KINA, HYFD…VNKG, TWLI…VAGG, ENYQ…PWNN, and LLII…VTVQ. Residue E228 is the Proton acceptor of the active site.

The protein belongs to the NanM family. In terms of assembly, homodimer.

It is found in the periplasm. It carries out the reaction N-acetyl-alpha-neuraminate = N-acetyl-beta-neuraminate. Its function is as follows. Converts alpha-N-acetylneuranimic acid (Neu5Ac) to the beta-anomer, accelerating the equilibrium between the alpha- and beta-anomers. Probably facilitates sialidase-negative bacteria to compete successfully for limited amounts of extracellular Neu5Ac, which is likely taken up in the beta-anomer. In addition, the rapid removal of sialic acid from solution might be advantageous to the bacterium to damp down host responses. The chain is N-acetylneuraminate epimerase from Escherichia coli O9:H4 (strain HS).